We begin with the raw amino-acid sequence, 199 residues long: V-type proton ATPase subunit E (199 aa).

Belongs to the V-ATPase E subunit family.

In terms of biological role, produces ATP from ADP in the presence of a proton gradient across the membrane. This Clostridium botulinum (strain Loch Maree / Type A3) protein is V-type proton ATPase subunit E.